The primary structure comprises 188 residues: Ion-translocating oxidoreductase complex subunit B (188 aa).

Positions 1–23 are hydrophobic; the sequence is MIEAAVSMSALGLGLGLLLGVAA. The region spanning 29–88 is the 4Fe-4S domain; sequence ESPPIVDAIEGILPGTNCGACGYPGCRGLAEAMSEGAAPVTACAPGGRDVALALAAIVET. Residues Cys-46, Cys-49, Cys-54, Cys-71, Cys-113, Cys-116, Cys-119, Cys-123, Cys-143, Cys-146, Cys-149, and Cys-153 each coordinate [4Fe-4S] cluster. 4Fe-4S ferredoxin-type domains are found at residues 104-133 and 134-163; these read TVAF…GANR and QIHT…ARVK.

Belongs to the 4Fe4S bacterial-type ferredoxin family. RnfB subfamily. The complex is composed of six subunits: RnfA, RnfB, RnfC, RnfD, RnfE and RnfG. It depends on [4Fe-4S] cluster as a cofactor.

Its subcellular location is the cellular chromatophore membrane. In terms of biological role, part of a membrane-bound complex that couples electron transfer with translocation of ions across the membrane. The sequence is that of Ion-translocating oxidoreductase complex subunit B from Cereibacter sphaeroides (strain ATCC 17023 / DSM 158 / JCM 6121 / CCUG 31486 / LMG 2827 / NBRC 12203 / NCIMB 8253 / ATH 2.4.1.) (Rhodobacter sphaeroides).